The following is a 455-amino-acid chain: Kynurenine 3-monooxygenase (455 aa).

Belongs to the aromatic-ring hydroxylase family. KMO subfamily. FAD is required as a cofactor.

The catalysed reaction is L-kynurenine + NADPH + O2 + H(+) = 3-hydroxy-L-kynurenine + NADP(+) + H2O. Its pathway is cofactor biosynthesis; NAD(+) biosynthesis; quinolinate from L-kynurenine: step 1/3. Catalyzes the hydroxylation of L-kynurenine (L-Kyn) to form 3-hydroxy-L-kynurenine (L-3OHKyn). Required for synthesis of quinolinic acid. This Xanthomonas euvesicatoria pv. vesicatoria (strain 85-10) (Xanthomonas campestris pv. vesicatoria) protein is Kynurenine 3-monooxygenase.